Reading from the N-terminus, the 80-residue chain is Large ribosomal subunit protein bL31B (80 aa).

It belongs to the bacterial ribosomal protein bL31 family. Type B subfamily. In terms of assembly, part of the 50S ribosomal subunit.

The sequence is that of Large ribosomal subunit protein bL31B from Streptococcus sanguinis (strain SK36).